A 318-amino-acid chain; its full sequence is Biotin synthase (318 aa).

Positions 44–273 (LCGKKFNLCT…EKQIRLAGGR (230 aa)) constitute a Radical SAM core domain. [4Fe-4S] cluster-binding residues include C62, C66, and C69. Residues S106, C138, C198, and R268 each coordinate [2Fe-2S] cluster.

It belongs to the radical SAM superfamily. Biotin synthase family. As to quaternary structure, homodimer. It depends on [4Fe-4S] cluster as a cofactor. [2Fe-2S] cluster is required as a cofactor.

It carries out the reaction (4R,5S)-dethiobiotin + (sulfur carrier)-SH + 2 reduced [2Fe-2S]-[ferredoxin] + 2 S-adenosyl-L-methionine = (sulfur carrier)-H + biotin + 2 5'-deoxyadenosine + 2 L-methionine + 2 oxidized [2Fe-2S]-[ferredoxin]. The protein operates within cofactor biosynthesis; biotin biosynthesis; biotin from 7,8-diaminononanoate: step 2/2. Its function is as follows. Catalyzes the conversion of dethiobiotin (DTB) to biotin by the insertion of a sulfur atom into dethiobiotin via a radical-based mechanism. The protein is Biotin synthase of Clostridium botulinum (strain Alaska E43 / Type E3).